The primary structure comprises 696 residues: Putative cyclic nucleotide-gated ion channel 13 (696 aa).

Residues 1-81 lie on the Cytoplasmic side of the membrane; that stretch reads MAFGRNNRVR…QGSFLQNWNK (81 aa). The interval 45–65 is disordered; the sequence is KPLSFGSHNKKRDSNSSTTTQ. Residues 82-102 traverse the membrane as a helical segment; the sequence is IFLFASVIALAIDPLFFYIPI. Residues 103–116 lie on the Extracellular side of the membrane; it reads VDGERHCLNLHRNL. A helical transmembrane segment spans residues 117–137; the sequence is EIAASVLRTFIDAFYIIHIVF. Residues 138 to 170 lie on the Cytoplasmic side of the membrane; it reads QFRTAYISPSSRVFGRGELVDDPKAIAIKYLSS. Residues 171–191 traverse the membrane as a helical segment; it reads YFIIDLLSILPLPQLVVLAVI. Residues 192-204 are Extracellular-facing; it reads PNVNKPVSLITKD. Residues 205–225 traverse the membrane as a helical segment; sequence YLITVIFTQYIPRILRIYPLY. Topologically, residues 226 to 243 are cytoplasmic; that stretch reads TEVTRTSGIVTETAWAGA. The helical transmembrane segment at 244 to 264 threads the bilayer; sequence AWNLSLYMLASHVFGALWYLI. Over 265–367 the chain is Extracellular; that stretch reads SVEREDRCWR…GQNLNTSKFV (103 aa). Residues 368-388 form a helical membrane-spanning segment; the sequence is GEIIFAVSICISGLVLFALLI. At 389–696 the chain is on the cytoplasmic side; that stretch reads GNMQKYLEST…SEPDFSLRNP (308 aa). A nucleoside 3',5'-cyclic phosphate-binding positions include 474-598 and E545; that span reads LFEI…SKQL. A calmodulin-binding region spans residues 590-605; sequence FRRLHSKQLQHTFRFY. An IQ domain is found at 610-639; sequence RTWGASFIQAAWRRHCRRKLARSLTEEEDR. The interval 677 to 696 is disordered; it reads NNLPLLPPKPSEPDFSLRNP.

The protein belongs to the cyclic nucleotide-gated cation channel (TC 1.A.1.5) family. As to quaternary structure, homotetramer or heterotetramer.

The protein resides in the cell membrane. In terms of biological role, putative cyclic nucleotide-gated ion channel. The polypeptide is Putative cyclic nucleotide-gated ion channel 13 (CNGC13) (Arabidopsis thaliana (Mouse-ear cress)).